Here is a 361-residue protein sequence, read N- to C-terminus: Phospho-N-acetylmuramoyl-pentapeptide-transferase (361 aa).

10 helical membrane passes run 25 to 45, 73 to 93, 98 to 118, 139 to 159, 168 to 188, 200 to 220, 237 to 257, 264 to 284, 289 to 309, and 339 to 359; these read RGIL…PAVI, TMGG…WGDL, VWLV…DDWI, IFGL…AAIT, IALP…IVGF, GLAI…AYAS, AGEL…FLWF, VFMG…VAVI, LVLV…MIQV, and VIVR…ATLK.

Belongs to the glycosyltransferase 4 family. MraY subfamily. It depends on Mg(2+) as a cofactor.

It is found in the cell inner membrane. It catalyses the reaction UDP-N-acetyl-alpha-D-muramoyl-L-alanyl-gamma-D-glutamyl-meso-2,6-diaminopimeloyl-D-alanyl-D-alanine + di-trans,octa-cis-undecaprenyl phosphate = di-trans,octa-cis-undecaprenyl diphospho-N-acetyl-alpha-D-muramoyl-L-alanyl-D-glutamyl-meso-2,6-diaminopimeloyl-D-alanyl-D-alanine + UMP. It participates in cell wall biogenesis; peptidoglycan biosynthesis. Catalyzes the initial step of the lipid cycle reactions in the biosynthesis of the cell wall peptidoglycan: transfers peptidoglycan precursor phospho-MurNAc-pentapeptide from UDP-MurNAc-pentapeptide onto the lipid carrier undecaprenyl phosphate, yielding undecaprenyl-pyrophosphoryl-MurNAc-pentapeptide, known as lipid I. This chain is Phospho-N-acetylmuramoyl-pentapeptide-transferase, found in Xanthomonas campestris pv. campestris (strain 8004).